The chain runs to 333 residues: Protein RecA (333 aa).

69–76 (GPESSGKT) is a binding site for ATP.

Belongs to the RecA family.

Its subcellular location is the cytoplasm. Functionally, can catalyze the hydrolysis of ATP in the presence of single-stranded DNA, the ATP-dependent uptake of single-stranded DNA by duplex DNA, and the ATP-dependent hybridization of homologous single-stranded DNAs. It interacts with LexA causing its activation and leading to its autocatalytic cleavage. This is Protein RecA from Mesoplasma florum (strain ATCC 33453 / NBRC 100688 / NCTC 11704 / L1) (Acholeplasma florum).